Here is a 153-residue protein sequence, read N- to C-terminus: Endoribonuclease YbeY (153 aa).

Positions 113, 117, and 123 each coordinate Zn(2+).

The protein belongs to the endoribonuclease YbeY family. Requires Zn(2+) as cofactor.

Its subcellular location is the cytoplasm. Its function is as follows. Single strand-specific metallo-endoribonuclease involved in late-stage 70S ribosome quality control and in maturation of the 3' terminus of the 16S rRNA. This Aliivibrio fischeri (strain ATCC 700601 / ES114) (Vibrio fischeri) protein is Endoribonuclease YbeY.